The primary structure comprises 331 residues: N-arachidonyl glycine receptor (331 aa).

Residues M1–L26 lie on the Extracellular side of the membrane. N14 is a glycosylation site (N-linked (GlcNAc...) asparagine). Residues V27–F47 form a helical membrane-spanning segment. The Cytoplasmic portion of the chain corresponds to S48 to T56. The chain crosses the membrane as a helical span at residues V57–F77. Topologically, residues R78–Q95 are extracellular. C94 and C172 form a disulfide bridge. A helical membrane pass occupies residues I96–S116. The Cytoplasmic portion of the chain corresponds to A117 to A138. A helical transmembrane segment spans residues V139–L159. Over H160–R191 the chain is Extracellular. A glycan (N-linked (GlcNAc...) asparagine) is linked at N188. The helical transmembrane segment at L192 to H212 threads the bilayer. Residues N213–R232 lie on the Cytoplasmic side of the membrane. The helical transmembrane segment at I233–A253 threads the bilayer. Over F254–G268 the chain is Extracellular. Residues A269–V289 form a helical membrane-spanning segment. Topologically, residues S290 to L331 are cytoplasmic. Position 322 is a phosphoserine (S322).

Belongs to the G-protein coupled receptor 1 family.

The protein resides in the cell membrane. Its subcellular location is the cytoplasmic vesicle membrane. Its function is as follows. G protein-coupled receptor (GPCR) that plays a role in diverse physiological processes particularly within the immune and nervous systems. Becomes active when triggered by various endogenous ligands including endocannabinoid N-arachidonyl glycine (NAGly), delta-9-tetrahydrocannabinol or resolvin D2/RvD2 derived from the omega-3 fatty acid docosahexaenoic acid (DHA). Upon RvD2 binding, facilitates the resolution of inflammation, aiding in tissue repair and homeostasis. Mechanistically, RvD2 ligation initiates Galphas protein coupling, activation of cAMP-PKA signaling pathway and phosphorylation of STAT3, leading to RvD2-stimulated macrophage phagocytosis. Mediates NAGly-induced process of reorganization of actin filaments and induction of acrosomal exocytosis. Activation by N-arachidonoyl glycine (NAGly) can also induce apoptosis in macrophages. Plays a role in homeostasis of CD8+ subsets of intraepithelial lymphocytes (IELs) (CD8alphaalpha and CD8alphabeta IELs) in small intestine by supporting preferential migration of CD8alphaalpha T-cells to intraepithelial compartment over lamina propria compartment, and by mediating their reconstitution into small intestine after bone marrow transplant. Participates also in hypotensive responses, mediating reduction in intraocular and blood pressure. The chain is N-arachidonyl glycine receptor from Macaca fascicularis (Crab-eating macaque).